A 57-amino-acid chain; its full sequence is UPF0391 membrane protein azo1765 (57 aa).

The next 2 helical transmembrane spans lie at 1 to 21 and 33 to 53; these read MIKWAIIFFIISLVAGLFGFT and VLFFIALAIFLIVLIFGVGLG.

It belongs to the UPF0391 family.

It is found in the cell membrane. The polypeptide is UPF0391 membrane protein azo1765 (Azoarcus sp. (strain BH72)).